The following is a 324-amino-acid chain: uncharacterized protein (324 aa).

8 helical membrane-spanning segments follow: residues 5–24 (VIGI…NRAM), 39–61 (FIFM…PLLL), 68–90 (FYWI…FAAA), 95–117 (WLIA…LFYV), 130–152 (QKIP…LIQL), 162–179 (MLLF…AYPL), 199–218 (LGMT…YGWW), and 228–250 (TVQS…FWAT).

It localises to the cell membrane. This is an uncharacterized protein from Bacillus subtilis (strain 168).